A 129-amino-acid polypeptide reads, in one-letter code: Large ribosomal subunit protein bL12 (129 aa).

A compositionally biased stretch (basic and acidic residues) spans 95–123; sequence MVESTPKSIKEGVSKEDAEEAKKSLEDAG. The interval 95–129 is disordered; it reads MVESTPKSIKEGVSKEDAEEAKKSLEDAGGKASLK.

The protein belongs to the bacterial ribosomal protein bL12 family. In terms of assembly, homodimer. Part of the ribosomal stalk of the 50S ribosomal subunit. Forms a multimeric L10(L12)X complex, where L10 forms an elongated spine to which 2 to 4 L12 dimers bind in a sequential fashion. Binds GTP-bound translation factors.

Forms part of the ribosomal stalk which helps the ribosome interact with GTP-bound translation factors. Is thus essential for accurate translation. This chain is Large ribosomal subunit protein bL12, found in Acaryochloris marina (strain MBIC 11017).